Reading from the N-terminus, the 914-residue chain is MSDQFNSREARRKANSKSSPSPKKGKKRKKGGLFKKTLFTLLILFVLGVVGGAVTFAVMVSDAPSLDESKLKTPYSSTIYDKNGKEIAEVGAEKRTYVSIDEIPDVVKEAFIATEDARFYEHHGIDPVRIGGALVANFKDGFGAEGGSTITQQVVKNSLLSHQKTLKRKVQEVWLSIQLERNYSKDEILEMYLNRIYFSPRAYGIGKAAEEFFGVTDLSKLTVEQAATLAGMPQSPTAYNPVKNPDKAEKRRNIVLSLMKKQGFISDSQYNKAKKVAVKDEGVVSQKEYEKASTNKYSAFVEEVMKEIDEKSDVDPSADGLKIYTTLDTKAQDKLDELMDGDTVGFTEGMQGGVTLLDTKNGEVRAIGAGRNQPVGGFNYATQTKAQPGSTIKPILDYGPVIENKKWSTYEQIDDSAYTYSNGKPIRDWDRKYLGPISMRYALAQSRNIPALKAFQAVGKDTAVDFANGLGLGLTKDNVTEAYSIGGFGGNDGVSPLTMAGAYSAFGNNGTYNEPHFVKSIEFNDGTKLDLTPKSKSAMSDYTAFMITDMLKTAVKTGTGQLAQVPGVEVAGKTGTTNFDDNEVKRYNIASGGARDSWFVGYTPQYTAAVWTGMGENEAGKKSLSAEEQKVAKRIFAQLIADVDDGSGSFEKPDSVVEATVEKGSNPAKLAGPNTPSDKKLTEYFVKGTAPSTVSKTYEKEEKEETAKLSGLNVKYDKDNQSLTLSWNYDGDATFAVKQSVDGGSYSEIQNSSAKEAVISGVQPGSVYKFEVTAVSDDGKSTASTSYEVPKAEDDEDKKDQQQTDDEKQDDEKTQDDTQTDDSQKDDGQTDQDQTDDSTNDQDKKQDNTNTNPSDNNNQDQSNDNDNDNSNNQDTSDGDSNSGKNDSTGSDTNKNKTDTSNKTQTNSSSIEKTN.

The interval 1-29 (MSDQFNSREARRKANSKSSPSPKKGKKRK) is disordered. The Cytoplasmic segment spans residues 1-37 (MSDQFNSREARRKANSKSSPSPKKGKKRKKGGLFKKT). The helical; Signal-anchor for type II membrane protein transmembrane segment at 38–58 (LFTLLILFVLGVVGGAVTFAV) threads the bilayer. At 59–914 (MVSDAPSLDE…TNSSSIEKTN (856 aa)) the chain is on the extracellular side. Positions 77 to 246 (STIYDKNGKE…TAYNPVKNPD (170 aa)) are transglycosylase. Catalysis depends on E115, which acts as the Proton donor; for transglycosylase activity. The transpeptidase stretch occupies residues 329–662 (TKAQDKLDEL…PDSVVEATVE (334 aa)). Catalysis depends on S390, which acts as the Acyl-ester intermediate; for transpeptidase activity. One can recognise a Fibronectin type-III domain in the interval 708–795 (KLSGLNVKYD…SYEVPKAEDD (88 aa)). The tract at residues 773-914 (TAVSDDGKST…TNSSSIEKTN (142 aa)) is disordered. The span at 798–828 (KKDQQQTDDEKQDDEKTQDDTQTDDSQKDDG) shows a compositional bias: basic and acidic residues. Residues 829-840 (QTDQDQTDDSTN) show a composition bias toward acidic residues. Composition is skewed to low complexity over residues 848-892 (NTNT…GSDT) and 900-914 (SNKT…EKTN).

In the N-terminal section; belongs to the glycosyltransferase 51 family. This sequence in the C-terminal section; belongs to the transpeptidase family. Post-translationally, the product expressed from the translation of the ponA gene appears as two bands on a gel (1A and 1B), but the specific amino acid sequence of each protein is unknown. The N-terminus is blocked.

Its subcellular location is the cell membrane. It localises to the forespore inner membrane. The catalysed reaction is [GlcNAc-(1-&gt;4)-Mur2Ac(oyl-L-Ala-gamma-D-Glu-L-Lys-D-Ala-D-Ala)](n)-di-trans,octa-cis-undecaprenyl diphosphate + beta-D-GlcNAc-(1-&gt;4)-Mur2Ac(oyl-L-Ala-gamma-D-Glu-L-Lys-D-Ala-D-Ala)-di-trans,octa-cis-undecaprenyl diphosphate = [GlcNAc-(1-&gt;4)-Mur2Ac(oyl-L-Ala-gamma-D-Glu-L-Lys-D-Ala-D-Ala)](n+1)-di-trans,octa-cis-undecaprenyl diphosphate + di-trans,octa-cis-undecaprenyl diphosphate + H(+). It carries out the reaction Preferential cleavage: (Ac)2-L-Lys-D-Ala-|-D-Ala. Also transpeptidation of peptidyl-alanyl moieties that are N-acyl substituents of D-alanine.. Its pathway is cell wall biogenesis; peptidoglycan biosynthesis. Cell wall formation. Synthesis of cross-linked peptidoglycan from the lipid intermediates. The enzyme has a penicillin-insensitive transglycosylase N-terminal domain (formation of linear glycan strands) and a penicillin-sensitive transpeptidase C-terminal domain (cross-linking of the peptide subunits). Required for vegetative growth. Has a partially redundant function with PBP-2A (pbpA) during spore outgrowth. The chain is Penicillin-binding protein 1A/1B (ponA) from Bacillus subtilis (strain 168).